The primary structure comprises 359 residues: Peptide chain release factor 1 (359 aa).

Gln236 bears the N5-methylglutamine mark.

Belongs to the prokaryotic/mitochondrial release factor family. In terms of processing, methylated by PrmC. Methylation increases the termination efficiency of RF1.

The protein localises to the cytoplasm. Peptide chain release factor 1 directs the termination of translation in response to the peptide chain termination codons UAG and UAA. The protein is Peptide chain release factor 1 of Streptococcus pneumoniae (strain Hungary19A-6).